Consider the following 242-residue polypeptide: Peptidase E (242 aa).

Catalysis depends on charge relay system residues Ser-123, Asp-138, and His-160.

It belongs to the peptidase S51 family.

It is found in the cytoplasm. The enzyme catalyses Dipeptidase E catalyzes the hydrolysis of dipeptides Asp-|-Xaa. It does not act on peptides with N-terminal Glu, Asn or Gln, nor does it cleave isoaspartyl peptides.. Functionally, hydrolyzes dipeptides containing N-terminal aspartate residues. May play a role in allowing the cell to use peptide aspartate to spare carbon otherwise required for the synthesis of the aspartate family of amino acids. The protein is Peptidase E of Nostoc sp. (strain PCC 7120 / SAG 25.82 / UTEX 2576).